The chain runs to 219 residues: Proteasome subunit beta type-9 (219 aa).

Residues 1–20 (MLRAGAPTAGSFRTKEVHTG) constitute a propeptide, removed in mature form. The Nucleophile role is filled by T21. K53 and K109 each carry N6-acetyllysine.

The protein belongs to the peptidase T1B family. As to quaternary structure, the 26S proteasome consists of a 20S proteasome core and two 19S regulatory subunits. The 20S proteasome core is composed of 28 subunits that are arranged in four stacked rings, resulting in a barrel-shaped structure. The two end rings are each formed by seven alpha subunits, and the two central rings are each formed by seven beta subunits. The catalytic chamber with the active sites is on the inside of the barrel. Component of the immunoproteasome, where it displaces the equivalent housekeeping subunit PSMB6. Component of the spermatoproteasome, a form of the proteasome specifically found in testis. Post-translationally, autocleaved. The resulting N-terminal Thr residue of the mature subunit is responsible for the nucleophile proteolytic activity.

Its subcellular location is the cytoplasm. The protein resides in the nucleus. The enzyme catalyses Cleavage of peptide bonds with very broad specificity.. In terms of biological role, the proteasome is a multicatalytic proteinase complex which is characterized by its ability to cleave peptides with Arg, Phe, Tyr, Leu, and Glu adjacent to the leaving group at neutral or slightly basic pH. The proteasome has an ATP-dependent proteolytic activity. This subunit is involved in antigen processing to generate class I binding peptides. The protein is Proteasome subunit beta type-9 (Psmb9) of Mus platythrix (Flat-haired mouse).